The primary structure comprises 358 residues: Gentisate 1,2-dioxygenase (358 aa).

The Cupin type-1 domain maps to 239–358; the sequence is QTLRQRAEND…AFNFYAEAEP (120 aa).

The protein belongs to the gentisate 1,2-dioxygenase family. Homotetramer.

It carries out the reaction 2,5-dihydroxybenzoate + O2 = 3-maleylpyruvate + H(+). It participates in aromatic compound metabolism; naphthalene degradation. Its activity is regulated as follows. Inhibited by 2,2'-dipyridyl. Functionally, catalyzes the oxygen-dependent ring fission of gentisate between the carboxyl and proximal hydroxyl groups at positions 1 and 2 of the aromatic ring to form maleylpyruvate. No activity with cathechol and protecatechuate as substrates. Part of a 3-hydroxybenzoic acid-degradation pathway. The sequence is that of Gentisate 1,2-dioxygenase (gdoA) from Haloferax sp.